Consider the following 318-residue polypeptide: MAKWTELQDKSFLEATARERAVGIVDEGTFTEFCGPFDKIYSPHLPLMGEAIEYDDGLVAGVGKIGKKPIFVISQEGRFIGGSIGEVSGAKMVKTIQLASDLYEEMVSEKPDLPEEMRPAVVISFETGGVRLHEANAGLLAHAEVMDQIQNCRGRVPIISLIGSRVGCFGGMGFVAAATDVIIMSQFGRLGLTGPEVIEQEMGKDEFDASDRALVYRTTGGKHKYIIGDCNYLAADSIRSFRETTTAVLQKPMEEIETFRRIGSMEKIKEQIELVKLSVSLKPKDSMDVWAHAGNENPESLINMTLDEFLAQAKRLKA.

The region spanning 2–257 is the CoA carboxyltransferase N-terminal domain; that stretch reads AKWTELQDKS…VLQKPMEEIE (256 aa).

The protein resides in the cytoplasm. The catalysed reaction is N(6)-biotinyl-L-lysyl-[protein] + malonyl-[ACP] = N(6)-carboxybiotinyl-L-lysyl-[protein] + acetyl-[ACP]. Its function is as follows. Gamma subunit of the biotin-dependent malonate decarboxylase multienzyme complex (EC 7.2.4.4). The two subunits MADC and MADD are required for the transfer of the malonate carboxy group from the acyl-carrier protein (ACP) to the prosthetic group of the biotin carrier MADF. Required for the regeneration of ACP. The protein is Malonyl-S-ACP:biotin-protein carboxyltransferase MADC (madC) of Malonomonas rubra.